A 72-amino-acid polypeptide reads, in one-letter code: uncharacterized protein (72 aa).

It belongs to the ycf76 family.

The protein resides in the plastid. Its subcellular location is the chloroplast. This is an uncharacterized protein from Oryza nivara (Indian wild rice).